We begin with the raw amino-acid sequence, 1433 residues long: MNEIIVGEYKIHSLLKSFADKDEERNVYIVLNKSNEKFICKEIIYTQNSNIDNEKRKSEYINLKKFSDTIKYPHLNISKYIEHFIILENQQEKEKIKKQYIITEFYDGGDLSSLKITNKKCFSIKNGDIIYLFLKMLIIFKEFQTVIIHRDIKPDGSIVNDYYLCDLGSSTQVKTINSSTLIGTNQYIAPDVIKRGGYTGTIDIYGLGKTLLLLLNRVQQNQYNKINKILFEMMCSNESTERPTVDQLIEFMVCQYDNISFTEFDDFTHPLSKDCIEYFKNNKLNILKKDVKPIQIKIKIKEKEYRAYGAIQALLRNFYYIDNVISIEDNNNNNNNNNNNNNNNNNNNNNNNNNNNNNNNNNSDGPIEVAEFEWNENTDRLASELLLGHFKTETGGKNYEIANSHIEFVLKSEVLKSLSYHDEIVIDRQATPIYDNFINSDDSQAQIPPTSTKCIHIFSNHKYNFQKFIRDLPYGELTGDVQLKAIFHLILVIFEIAENGPDFMYNALLEKNMGTLFIIPPSSETTPRPPTPTATTTPTPTATTPTTTTATTTKLSQHNFKFLFPFRSYAFSHSSNTKLHIFLNIFGDHTKDGLIVDILKLAKELDKTKLPTVDIILQLIKMIQKEKCKLLETYSNSGLDFYFNNFETLIFNYELKESLTKLIDKNKIIHCVDSLNQILTTRYFYFVENHYKCYAIEPYKSLELISSFNENKNIYIRKLLHYSSFPSMKRFKYIQTYYDKVNNSHYFVFEIPKKLLNTTKKMELTKQSSSTTTKIDRMKIFKNLIVQHLNNIQELKTHLKSIYEYSFNLVISLEDDNKFELYYSNSVSPFSSDGFIRSFYDIGKWVFGNLNNQEEEGDQLVKMKSYFSFLRILSELSWFCNILGSGNVHNSIVYNELNIYYYLKMLLPLLNDIKINVFHYQIQNDIFAKIIIGNTQYNIINLIEPNHIDDPFSMVQYHLYIMELEKIETSDKFTCLRKQFNQRPQKQSKIFEIPNPNNSIDEILIEPTLIVQDINTSFQFFKVNGIIKTIEDFNQEKDYSNIIILRSFLYFLQYLFKNPSKTTLLVLFDIRKIDFDNINSSNDIDNESIPQYLCFDFLYFIKQMYGIDIYFQFEDFLEIISTRPSIVSNIIQSNKKKILNDIICMDIIENDISMKDVFYLLSVDIIKTISPTVNLVIYDKRYYIQKEVGSISKIREWKKFGIISSHPDAVVFLKYGKKDLKSAMLDNGKVNDENYYGIAVEDYMKSNELNILYYLLSKQEEPDFTNIERYYLENDKIYAMFPYVNGSCNLSEIDNLNEMDLLNILYQLCFQLHQLENLGIFHRDVKPENIISLRYGNGGIVVFIVDFGISQYKGKHLENYYSRDGTFGYQAPEIYREELRGDGDIKTQKYKMDVFSLGCTMAFLIKKFNITSTYLNDFIDNMTQPHVCKSFKK.

ATP is bound by residues 1–4 (MNEI) and Lys-41. The Protein kinase 1 domain maps to 1-272 (MNEIIVGEYK…EFDDFTHPLS (272 aa)). The active-site Proton acceptor is Asp-151. Low complexity-rich tracts occupy residues 332–362 (NNNNNNNNNNNNNNNNNNNNNNNNNNNNNNN) and 533–550 (TATTTPTPTATTPTTTTA). Disordered regions lie at residues 332 to 366 (NNNNNNNNNNNNNNNNNNNNNNNNNNNNNNNSDGP) and 521 to 550 (PSSETTPRPPTPTATTTPTPTATTPTTTTA). The Protein kinase 2 domain occupies 1177-1433 (IYDKRYYIQK…QPHVCKSFKK (257 aa)).

Belongs to the protein kinase superfamily. Ser/Thr protein kinase family.

The catalysed reaction is L-seryl-[protein] + ATP = O-phospho-L-seryl-[protein] + ADP + H(+). It catalyses the reaction L-threonyl-[protein] + ATP = O-phospho-L-threonyl-[protein] + ADP + H(+). In Dictyostelium discoideum (Social amoeba), this protein is Probable serine/threonine-protein kinase DDB_G0277989.